A 487-amino-acid polypeptide reads, in one-letter code: Cytochrome P450 2C5 (487 aa).

Residue Cys-432 participates in heme binding.

This sequence belongs to the cytochrome P450 family. The cofactor is heme.

It is found in the endoplasmic reticulum membrane. Its subcellular location is the microsome membrane. It carries out the reaction an organic molecule + reduced [NADPH--hemoprotein reductase] + O2 = an alcohol + oxidized [NADPH--hemoprotein reductase] + H2O + H(+). Cytochromes P450 are a group of heme-thiolate monooxygenases. In liver microsomes, this enzyme is involved in an NADPH-dependent electron transport pathway. It oxidizes a variety of structurally unrelated compounds, including steroids, fatty acids, and xenobiotics. The chain is Cytochrome P450 2C5 (CYP2C5) from Oryctolagus cuniculus (Rabbit).